Reading from the N-terminus, the 309-residue chain is Uricase (309 aa).

Residue A2 is modified to N-acetylalanine. Catalysis depends on charge relay system residues K16 and T63. Residues T63, D64, F165, R182, V237, Q238, and N264 each contribute to the urate site. H266 (charge relay system) is an active-site residue. The Microbody targeting signal motif lies at 307–309 (SKL).

It belongs to the uricase family.

It is found in the peroxisome. The catalysed reaction is urate + O2 + H2O = 5-hydroxyisourate + H2O2. Its pathway is purine metabolism; urate degradation; (S)-allantoin from urate: step 1/3. Functionally, catalyzes the oxidation of uric acid to 5-hydroxyisourate, which is further processed to form (S)-allantoin. The sequence is that of Uricase from Arabidopsis thaliana (Mouse-ear cress).